A 122-amino-acid chain; its full sequence is Large ribosomal subunit protein uL14 (122 aa).

It belongs to the universal ribosomal protein uL14 family. Part of the 50S ribosomal subunit. Forms a cluster with proteins L3 and L19. In the 70S ribosome, L14 and L19 interact and together make contacts with the 16S rRNA in bridges B5 and B8.

Its function is as follows. Binds to 23S rRNA. Forms part of two intersubunit bridges in the 70S ribosome. This chain is Large ribosomal subunit protein uL14, found in Rhodospirillum rubrum (strain ATCC 11170 / ATH 1.1.1 / DSM 467 / LMG 4362 / NCIMB 8255 / S1).